Consider the following 993-residue polypeptide: ATP-dependent DNA helicase MPH1 (993 aa).

The region spanning 94-261 (IVHKSLFQNT…EVVNNLDISK (168 aa)) is the Helicase ATP-binding domain. Position 107–114 (107–114 (IPTGMGKT)) interacts with ATP. The DEAH box motif lies at 209–212 (DEAH). The Helicase C-terminal domain occupies 507–655 (KVERLHRQEQ…CIDYKKSDRI (149 aa)). The tract at residues 530 to 551 (NDKLERSARRTGSSEEAQISGM) is disordered. A compositionally biased stretch (polar residues) spans 539-551 (RTGSSEEAQISGM).

This sequence belongs to the DEAD box helicase family. DEAH subfamily. FANCM sub-subfamily. In terms of assembly, interacts with the MHF histone-fold complex to form the FANCM-MHF complex.

It is found in the nucleus. The enzyme catalyses ATP + H2O = ADP + phosphate + H(+). Its function is as follows. ATP-dependent DNA helicase involved in DNA damage repair by homologous recombination and in genome maintenance. Capable of unwinding D-loops. Plays a role in limiting crossover recombinants during mitotic DNA double-strand break (DSB) repair. Component of a FANCM-MHF complex which promotes gene conversion at blocked replication forks, probably by reversal of the stalled fork. The protein is ATP-dependent DNA helicase MPH1 of Saccharomyces cerevisiae (strain YJM789) (Baker's yeast).